The sequence spans 345 residues: Protein GAMETE CELL DEFECTIVE 1, mitochondrial (345 aa).

Residues 1–43 constitute a mitochondrion transit peptide; sequence MLALRKTLLHGRLPAAPPAAAAAAIASRIPALLRRLSSSPGDG. The segment at 36–81 is disordered; the sequence is LSSSPGDGQGGDEWGSSWSTGITKEHFDGSDAAVGRPVTSPSKPVS.

Expressed in roots, stems, leaves and florets.

Its subcellular location is the mitochondrion. In terms of biological role, essential for fertility (male and female gametophyte functions and development). Required for the integrity of female gametic mitochondria. Involved in embryo apical-basal patterning, and particularly dorsal-ventral patterning, during early embryogenesis, and endosperm free nucleus positioning and development as well as early endosperm development, probably by modulating the expression pattern of related genes (e.g. AL1, MYB3/AL2, CYP78A13/GE, PNH1, HAZ1, MPK6 and OSH1). Has function in triggering of endosperm programmed cell death (PCD) leading to syncytial endosperm cellularization and starchy endosperm cell maturation. Implicated in central vacuole dynamics necessary for microspore development leading to pollen production, and for pollen development and germination. The protein is Protein GAMETE CELL DEFECTIVE 1, mitochondrial of Oryza sativa subsp. japonica (Rice).